A 58-amino-acid chain; its full sequence is Sperm histone P2b (58 aa).

Positions 20–41 (LRRRRYRSSRRRRRRPCRRRRH) are disordered.

The protein belongs to the protamine P2 family. In terms of tissue distribution, testis.

The protein localises to the nucleus. It is found in the chromosome. Protamines substitute for histones in the chromatin of sperm during the haploid phase of spermatogenesis. They compact sperm DNA into a highly condensed, stable and inactive complex. This chain is Sperm histone P2b, found in Equus caballus (Horse).